The chain runs to 229 residues: Large ribosomal subunit protein uL1 (229 aa).

Belongs to the universal ribosomal protein uL1 family. Part of the 50S ribosomal subunit.

Functionally, binds directly to 23S rRNA. The L1 stalk is quite mobile in the ribosome, and is involved in E site tRNA release. Its function is as follows. Protein L1 is also a translational repressor protein, it controls the translation of the L11 operon by binding to its mRNA. The polypeptide is Large ribosomal subunit protein uL1 (Streptococcus pneumoniae serotype 2 (strain D39 / NCTC 7466)).